We begin with the raw amino-acid sequence, 391 residues long: Somatostatin receptor type 1 (391 aa).

A disordered region spans residues 1 to 50 (MFPNGTASSPSSSPSPSPGSCGEGACSRGPGSGAADGMEEPGRNASQNGT). Topologically, residues 1–56 (MFPNGTASSPSSSPSPSPGSCGEGACSRGPGSGAADGMEEPGRNASQNGTLSEGQG) are extracellular. N-linked (GlcNAc...) asparagine glycosylation is present at Asn4. The segment covering 8–20 (SSPSSSPSPSPGS) has biased composition (low complexity). Asn44 and Asn48 each carry an N-linked (GlcNAc...) asparagine glycan. The chain crosses the membrane as a helical span at residues 57–84 (SAILISFIYSVVCLVGLCGNSMVIYVIL). Over 85 to 94 (RYAKMKTATN) the chain is Cytoplasmic. A helical transmembrane segment spans residues 95-120 (IYILNLAIADELLMLSVPFLVTSTLL). The Extracellular portion of the chain corresponds to 121–131 (RHWPFGALLCR). Cysteines 130 and 208 form a disulfide. The helical transmembrane segment at 132–153 (LVLSVDAVNMFTSIYCLTVLSV) threads the bilayer. At 154 to 175 (DRYVAVVHPIKAARYRRPTVAK) the chain is on the cytoplasmic side. Residues 176-196 (VVNLGVWVLSLLVILPIVVFS) traverse the membrane as a helical segment. Over 197–219 (RTAANSDGTVACNMLMPEPAQRW) the chain is Extracellular. Residues 220-244 (LVGFVLYTFLMGFLLPVGAICLCYV) traverse the membrane as a helical segment. Residues 245 to 270 (LIIAKMRMVALKAGWQQRKRSERKIT) are Cytoplasmic-facing. A helical transmembrane segment spans residues 271–296 (LMVMMVVMVFVICWMPFYVVQLVNVF). Over 297–303 (AEQDDAT) the chain is Extracellular. A helical membrane pass occupies residues 304-327 (VSQLSVILGYANSCANPILYGFLS). At 328–391 (DNFKRSFQRI…GTCASRISTL (64 aa)) the chain is on the cytoplasmic side. Residue Cys339 is the site of S-palmitoyl cysteine attachment.

The protein belongs to the G-protein coupled receptor 1 family. As to expression, jejunum and stomach.

Its subcellular location is the cell membrane. In terms of biological role, receptor for somatostatin with higher affinity for somatostatin-14 than -28. This receptor is coupled via pertussis toxin sensitive G proteins to inhibition of adenylyl cyclase. In addition it stimulates phosphotyrosine phosphatase and Na(+)/H(+) exchanger via pertussis toxin insensitive G proteins. The protein is Somatostatin receptor type 1 (Sstr1) of Mus musculus (Mouse).